The chain runs to 326 residues: MTKAKSFLKEIDYSKKEIEDFIDLAMQFKKLKKERIPHRYFDGLNIALIFEKTSTRTRSAFTVAGQDLGMNVSYLGKDDIQLGKKESLVDTAKVLGTMFDGIEYRGFKQESVELLAEFSGVPVWNGLTDTWHPTQMIADFMTVKEHFGKFEDLTLAYLGDGRNNVANSLLVTSAILGINVKIIAPKELQPESEIVALAKKHQTKGLITITDDTAAVADTDILYTDIWVSMGEKVDFKERIDLLLPYQINQALLNRVRKPNALVLHCLPAFHDLNTEIGREIYERYGYKELEMTDAVFQKHSQTIFQEAENRLHSIKAIMYHSLKNI.

Carbamoyl phosphate is bound by residues S54–T57, Q81, R105, and H132–Q135. Residues N164, D225, and S229–M230 each bind L-ornithine. Residues C266 to L267 and R311 each bind carbamoyl phosphate.

The protein belongs to the aspartate/ornithine carbamoyltransferase superfamily. OTCase family.

It is found in the cytoplasm. It catalyses the reaction carbamoyl phosphate + L-ornithine = L-citrulline + phosphate + H(+). Its pathway is amino-acid biosynthesis; L-arginine biosynthesis; L-arginine from L-ornithine and carbamoyl phosphate: step 1/3. In terms of biological role, reversibly catalyzes the transfer of the carbamoyl group from carbamoyl phosphate (CP) to the N(epsilon) atom of ornithine (ORN) to produce L-citrulline. The polypeptide is Ornithine carbamoyltransferase (argF) (Streptococcus mutans serotype c (strain ATCC 700610 / UA159)).